The sequence spans 60 residues: Large ribosomal subunit protein eL37 (60 aa).

Zn(2+) is bound by residues C18, C21, C33, and C36. The C4-type zinc-finger motif lies at 18 to 36; the sequence is CRRCGKNSYHVRKKVCAAC.

This sequence belongs to the eukaryotic ribosomal protein eL37 family. The cofactor is Zn(2+).

Binds to the 23S rRNA. The chain is Large ribosomal subunit protein eL37 (rpl37e) from Methanothermobacter thermautotrophicus (strain ATCC 29096 / DSM 1053 / JCM 10044 / NBRC 100330 / Delta H) (Methanobacterium thermoautotrophicum).